A 221-amino-acid chain; its full sequence is UPF0502 protein VSAL_II0605 (221 aa).

Belongs to the UPF0502 family.

The chain is UPF0502 protein VSAL_II0605 from Aliivibrio salmonicida (strain LFI1238) (Vibrio salmonicida (strain LFI1238)).